Reading from the N-terminus, the 328-residue chain is MSAVAPDGRKMLRLEVRNAQTPIERKPEWIKTRAKMGPEYTKMQNLVKSEGLHTVCQEAGCPNIYECWEDREATFLIGGDQCTRRCDFCQIDTGKPEALDRDEPRRVGESVVTMDLNYATITGVARDDLEDGGAWLYAETVRQIHAQTAGREAGRTKVELLAPDFNAEPDQLAEVFSARPEVFAHNVETVPRIFKRIRPGFRYERSLKVITEARDYGLVTKSNLILGMGETREEVSEALRQLHDAGCELITITQYLRPSVRHHPVERWVKPHEFVELKEEAEEIGFSGVMSGPLVRSSYRAGRLYQMAMELRQSAAPQGGAQVASQAV.

Residues C56, C61, C67, C82, C86, C89, and S298 each contribute to the [4Fe-4S] cluster site. Positions 68–287 constitute a Radical SAM core domain; that stretch reads WEDREATFLI…KEEAEEIGFS (220 aa).

This sequence belongs to the radical SAM superfamily. Lipoyl synthase family. The cofactor is [4Fe-4S] cluster.

It localises to the cytoplasm. It catalyses the reaction [[Fe-S] cluster scaffold protein carrying a second [4Fe-4S](2+) cluster] + N(6)-octanoyl-L-lysyl-[protein] + 2 oxidized [2Fe-2S]-[ferredoxin] + 2 S-adenosyl-L-methionine + 4 H(+) = [[Fe-S] cluster scaffold protein] + N(6)-[(R)-dihydrolipoyl]-L-lysyl-[protein] + 4 Fe(3+) + 2 hydrogen sulfide + 2 5'-deoxyadenosine + 2 L-methionine + 2 reduced [2Fe-2S]-[ferredoxin]. Its pathway is protein modification; protein lipoylation via endogenous pathway; protein N(6)-(lipoyl)lysine from octanoyl-[acyl-carrier-protein]: step 2/2. Catalyzes the radical-mediated insertion of two sulfur atoms into the C-6 and C-8 positions of the octanoyl moiety bound to the lipoyl domains of lipoate-dependent enzymes, thereby converting the octanoylated domains into lipoylated derivatives. The protein is Lipoyl synthase of Streptomyces avermitilis (strain ATCC 31267 / DSM 46492 / JCM 5070 / NBRC 14893 / NCIMB 12804 / NRRL 8165 / MA-4680).